A 289-amino-acid polypeptide reads, in one-letter code: Thiazole synthase (289 aa).

Lys-132 serves as the catalytic Schiff-base intermediate with DXP. 1-deoxy-D-xylulose 5-phosphate is bound by residues Gly-193, 219–220 (AG), and 241–242 (NT).

This sequence belongs to the ThiG family. In terms of assembly, homotetramer. Forms heterodimers with either ThiH or ThiS.

It localises to the cytoplasm. The catalysed reaction is [ThiS sulfur-carrier protein]-C-terminal-Gly-aminoethanethioate + 2-iminoacetate + 1-deoxy-D-xylulose 5-phosphate = [ThiS sulfur-carrier protein]-C-terminal Gly-Gly + 2-[(2R,5Z)-2-carboxy-4-methylthiazol-5(2H)-ylidene]ethyl phosphate + 2 H2O + H(+). Its pathway is cofactor biosynthesis; thiamine diphosphate biosynthesis. In terms of biological role, catalyzes the rearrangement of 1-deoxy-D-xylulose 5-phosphate (DXP) to produce the thiazole phosphate moiety of thiamine. Sulfur is provided by the thiocarboxylate moiety of the carrier protein ThiS. In vitro, sulfur can be provided by H(2)S. The polypeptide is Thiazole synthase (Rhodospirillum rubrum (strain ATCC 11170 / ATH 1.1.1 / DSM 467 / LMG 4362 / NCIMB 8255 / S1)).